The primary structure comprises 98 residues: U11-barytoxin-Tl1b (98 aa).

An N-terminal signal peptide occupies residues 1–21 (MKTLVLVAVLGLASLYLLSYA). A propeptide spanning residues 22–50 (SEVQQLSRDEEEFRALVASFGGLFDTEER) is cleaved from the precursor. Cystine bridges form between Cys57–Cys71, Cys64–Cys76, and Cys70–Cys89.

It belongs to the neurotoxin 10 (Hwtx-1) family. 25 (ICK4) subfamily. Expressed by the venom gland.

The protein resides in the secreted. Functionally, ion channel inhibitor. The protein is U11-barytoxin-Tl1b of Trittame loki (Brush-footed trapdoor spider).